A 792-amino-acid chain; its full sequence is Serine/threonine-protein kinase Nek4 (792 aa).

The region spanning 6–261 (YCYMRVVGRG…VRSILRQPYI (256 aa)) is the Protein kinase domain. Residues 12-20 (VGRGSYGEV) and K35 each bind ATP. D131 functions as the Proton acceptor in the catalytic mechanism. Residue T165 is modified to Phosphothreonine; by autocatalysis. Disordered stretches follow at residues 329 to 358 (QEKPVDIGPLRSPASLEGHTGKQDMNNTGE), 379 to 515 (ANAG…LPSY), 527 to 611 (QQND…SITQ), and 628 to 657 (LSEDELSSSTSSTDKSDGDSREGKSHTNEM). Phosphoserine is present on residues S340 and S343. 5 stretches are compositionally biased toward polar residues: residues 412 to 421 (QGNTKSSDQP), 456 to 467 (DQVTGIIENQDS), 473 to 484 (QPHSSMSEPSLS), 496 to 505 (AHSGTKSQFQ), and 541 to 551 (VNSSRTSSTAS). K566 carries the N6-methyllysine modification. Over residues 602-611 (RFSSDCSITQ) the composition is skewed to polar residues. Residues 641–657 (DKSDGDSREGKSHTNEM) show a composition bias toward basic and acidic residues. Residue S675 is modified to Phosphoserine.

Belongs to the protein kinase superfamily. NEK Ser/Thr protein kinase family. NIMA subfamily. Mn(2+) serves as cofactor. As to expression, expressed ubiquitously among various organs and is up-regulated in the testis.

It is found in the cytoplasm. It localises to the cell projection. The protein localises to the cilium. It catalyses the reaction L-seryl-[protein] + ATP = O-phospho-L-seryl-[protein] + ADP + H(+). The enzyme catalyses L-threonyl-[protein] + ATP = O-phospho-L-threonyl-[protein] + ADP + H(+). Functionally, required for normal entry into proliferative arrest after a limited number of cell divisions, also called replicative senescence. Required for normal cell cycle arrest in response to double-stranded DNA damage. Protein kinase that seems to act exclusively upon threonine residues. This chain is Serine/threonine-protein kinase Nek4 (Nek4), found in Mus musculus (Mouse).